A 105-amino-acid polypeptide reads, in one-letter code: Large ribosomal subunit protein eL36 (105 aa).

The protein belongs to the eukaryotic ribosomal protein eL36 family. Component of the large ribosomal subunit.

It is found in the cytoplasm. The protein localises to the cytosol. Component of the large ribosomal subunit. The ribosome is a large ribonucleoprotein complex responsible for the synthesis of proteins in the cell. The sequence is that of Large ribosomal subunit protein eL36 (RPL36) from Hydrophis hardwickii (Hardwick's spine-bellied seasnake).